Reading from the N-terminus, the 312-residue chain is uncharacterized protein (312 aa).

The disordered stretch occupies residues 95 to 119 (EKRRENPPKLTLPPLPPPAEERKKP).

Its subcellular location is the plastid. It is found in the chloroplast. This is an uncharacterized protein from Chlamydomonas moewusii (Chlamydomonas eugametos).